The following is a 412-amino-acid chain: Multifunctional CCA protein (412 aa).

The ATP site is built by Gly8 and Arg11. 2 residues coordinate CTP: Gly8 and Arg11. The Mg(2+) site is built by Glu21 and Asp23. The ATP site is built by Arg91, Arg137, and Arg140. CTP contacts are provided by Arg91, Arg137, and Arg140. The region spanning 228–329 (CGIHTLMSLQ…WRLLQRLDVL (102 aa)) is the HD domain.

This sequence belongs to the tRNA nucleotidyltransferase/poly(A) polymerase family. Bacterial CCA-adding enzyme type 1 subfamily. Monomer. Can also form homodimers and oligomers. Requires Mg(2+) as cofactor. Ni(2+) serves as cofactor.

The enzyme catalyses a tRNA precursor + 2 CTP + ATP = a tRNA with a 3' CCA end + 3 diphosphate. The catalysed reaction is a tRNA with a 3' CCA end + 2 CTP + ATP = a tRNA with a 3' CCACCA end + 3 diphosphate. Functionally, catalyzes the addition and repair of the essential 3'-terminal CCA sequence in tRNAs without using a nucleic acid template. Adds these three nucleotides in the order of C, C, and A to the tRNA nucleotide-73, using CTP and ATP as substrates and producing inorganic pyrophosphate. tRNA 3'-terminal CCA addition is required both for tRNA processing and repair. Also involved in tRNA surveillance by mediating tandem CCA addition to generate a CCACCA at the 3' terminus of unstable tRNAs. While stable tRNAs receive only 3'-terminal CCA, unstable tRNAs are marked with CCACCA and rapidly degraded. The protein is Multifunctional CCA protein of Acinetobacter baumannii (strain SDF).